The primary structure comprises 197 residues: Putative NADH dehydrogenase/NAD(P)H nitroreductase Lcho_1290 (197 aa).

It belongs to the nitroreductase family. HadB/RutE subfamily. FMN is required as a cofactor.

In Leptothrix cholodnii (strain ATCC 51168 / LMG 8142 / SP-6) (Leptothrix discophora (strain SP-6)), this protein is Putative NADH dehydrogenase/NAD(P)H nitroreductase Lcho_1290.